The chain runs to 186 residues: Histone deacetylase complex subunit SAP25 (186 aa).

Disordered stretches follow at residues 1 to 25 (MSPL…PSCG) and 148 to 186 (EQTP…GTDT). Polar residues-rich tracts occupy residues 148 to 163 (EQTP…STSC) and 177 to 186 (GDQSCSGTDT).

May be a component of the mSIN3A corepressor complex. Interacts with SIN3A and HDAC2. In terms of tissue distribution, widely expressed.

It is found in the nucleus. The protein localises to the cytoplasm. In terms of biological role, involved in the transcriptional repression mediated by the mSIN3A but not the N-CoR corepressor complex. The chain is Histone deacetylase complex subunit SAP25 (Sap25) from Mus musculus (Mouse).